Reading from the N-terminus, the 204-residue chain is FlaA locus 22.9 kDa protein (204 aa).

The disordered stretch occupies residues 115–140 (EKTAEDQKKSSEDHTEGSADSKASSE).

This is FlaA locus 22.9 kDa protein (ylxF) from Bacillus subtilis (strain 168).